An 814-amino-acid chain; its full sequence is Threonine--tRNA ligase 2, cytoplasmic (814 aa).

Residues 2–72 (AAHIAQRLTV…SLREEQERAR (71 aa)) are a coiled coil. Residues 62–142 (RSLREEQERA…GHKQEGPCAP (81 aa)) form a disordered region. Basic and acidic residues-rich tracts occupy residues 63 to 72 (SLREEQERAR), 88 to 102 (EEPK…EKGQ), and 119 to 137 (GNKK…HKQE). The 63-residue stretch at 172–234 (KPIKITLADG…EQDSNVELLK (63 aa)) folds into the TGS domain. A Nuclear localization signal motif is present at residues 798 to 804 (KLKTLKK).

This sequence belongs to the class-II aminoacyl-tRNA synthetase family.

It is found in the cytoplasm. It localises to the nucleus. It carries out the reaction tRNA(Thr) + L-threonine + ATP = L-threonyl-tRNA(Thr) + AMP + diphosphate + H(+). Functionally, catalyzes the attachment of threonine to tRNA(Thr) in a two-step reaction: threonine is first activated by ATP to form Thr-AMP and then transferred to the acceptor end of tRNA(Thr). Also edits incorrectly charged tRNA(Thr) via its editing domain, at the post-transfer stage. The protein is Threonine--tRNA ligase 2, cytoplasmic (tars3) of Xenopus tropicalis (Western clawed frog).